A 475-amino-acid polypeptide reads, in one-letter code: MASAVYFCDHNGKPLLSRRYRDDIPLSAIDKFPILLSDLEEQSNLIPPCLNHNGLEYLFIQHNDLYVVAIVTSLSANAAAIFTFLHKLVEVLSDYLKTVEEESIRDNFVIIYELLDEVMDYGIPQITETKMLKQYITQKSFKLVKSAKKKRNATRPPVALTNSVSWRPEGITHKKNEAFLDIVESINMLMTQKGQVLRSEIIGDVKVNSKLSGMPDLKLGINDKGIFSKYLDDDTNIPSASATTSDNNTETDKKPSITSSSATNKKKVNIELEDLKFHQCVRLSKFENEKIITFIPPDGKFDLMNYRLSTTIKPLIWCDVNVQVHSNSRIEIHCKAKAQIKRKSTATNVEILIPVPDDADTPTFKYSHGSLKYVPEKSAILWKIRSFPGGKEYSMSAELGLPSISNNEDGNRTMPKSNAEILKGPVQIKFQIPYFTTSGIQVRYLKINEPKLQYKSYPWVRYITQSGDDYTIRLT.

The region spanning 175–473 (KNEAFLDIVE…TQSGDDYTIR (299 aa)) is the MHD domain. The tract at residues 240 to 262 (ASATTSDNNTETDKKPSITSSSA) is disordered.

Belongs to the adaptor complexes medium subunit family. Adaptor protein complex 1 (AP-1) is a heterotetramer composed of two large adaptins (gamma-type subunit APL4 and beta-type subunit APL2), a medium adaptin (mu-type subunit APM1) and a small adaptin (sigma-type subunit APS1). AP-1 interacts with clathrin.

It is found in the cytoplasmic vesicle. It localises to the clathrin-coated vesicle membrane. The protein localises to the membrane. Its subcellular location is the clathrin-coated pit. Functionally, component of the adaptor complexes which link clathrin to receptors in coated vesicles. Clathrin-associated protein complexes are believed to interact with the cytoplasmic tails of membrane proteins, leading to their selection and concentration. The AP-1 complex interacts directly with clathrin. AP57 is probably a subunit of the Golgi membrane adaptor. The polypeptide is AP-1 complex subunit mu-1-I (APM1) (Saccharomyces cerevisiae (strain ATCC 204508 / S288c) (Baker's yeast)).